A 389-amino-acid chain; its full sequence is 1-deoxy-D-xylulose 5-phosphate reductoisomerase (389 aa).

Residues Thr-10, Gly-11, Ser-12, Ile-13, Asn-38, and Asn-122 each contribute to the NADPH site. Lys-123 is a 1-deoxy-D-xylulose 5-phosphate binding site. Glu-124 is an NADPH binding site. Asp-148 serves as a coordination point for Mn(2+). 4 residues coordinate 1-deoxy-D-xylulose 5-phosphate: Ser-149, Glu-150, Ser-173, and His-196. Glu-150 is a binding site for Mn(2+). Gly-202 serves as a coordination point for NADPH. 1-deoxy-D-xylulose 5-phosphate is bound by residues Ser-209, Asn-214, Lys-215, and Glu-218. Glu-218 lines the Mn(2+) pocket.

The protein belongs to the DXR family. The cofactor is Mg(2+). Mn(2+) serves as cofactor.

The catalysed reaction is 2-C-methyl-D-erythritol 4-phosphate + NADP(+) = 1-deoxy-D-xylulose 5-phosphate + NADPH + H(+). It functions in the pathway isoprenoid biosynthesis; isopentenyl diphosphate biosynthesis via DXP pathway; isopentenyl diphosphate from 1-deoxy-D-xylulose 5-phosphate: step 1/6. Catalyzes the NADPH-dependent rearrangement and reduction of 1-deoxy-D-xylulose-5-phosphate (DXP) to 2-C-methyl-D-erythritol 4-phosphate (MEP). The polypeptide is 1-deoxy-D-xylulose 5-phosphate reductoisomerase (Wolbachia sp. subsp. Brugia malayi (strain TRS)).